Reading from the N-terminus, the 441-residue chain is C4-dicarboxylate transport protein (441 aa).

At 1 to 30 (MIIEHSAEVRGKTPLYRHLYVQVLAAIAAG) the chain is on the cytoplasmic side. A helical transmembrane segment spans residues 31–49 (ILLGHFYPDIGTELKPLGD). At 50-68 (AFIRLVKMIIAPVIFLTVA) the chain is on the periplasmic side. Residues 69–87 (TGIAGMTDLAKVGRVAGKA) form a helical membrane-spanning segment. The Cytoplasmic segment spans residues 88–99 (MIYFLAFSTLAL). Residues 100–118 (VVGLVVANVVQPGAGMHID) traverse the membrane as a helical segment. The Periplasmic segment spans residues 119–149 (PASLDAKAVATYAEKAHEQSITGFLMNIIPT). A helical membrane pass occupies residues 150–168 (TLVGAFAEGDILQVLFISV). Residues 169-171 (LFG) are Cytoplasmic-facing. Residues 172 to 190 (ISLAIVGKKAEPVVDFLQA) form a helical membrane-spanning segment. Topologically, residues 191–209 (LTLPIFRLVAILMKAAPIG) are periplasmic. Residues 210-228 (AFGAMAFTIGKYGIASIAN) form a helical membrane-spanning segment. The Cytoplasmic segment spans residues 229 to 241 (LAMLIGTFYLTSF). A helical membrane pass occupies residues 242 to 260 (LFVFIVLGAVARYNGFSIL). The Periplasmic portion of the chain corresponds to 261-281 (SLIRYIKEELLLVLGTSSSEA). A helical transmembrane segment spans residues 282–300 (ALPGLMNKMEKAGCKRSVV). The Cytoplasmic portion of the chain corresponds to 301-320 (GLVIPTGYSFNLDGTNIYMT). The helical transmembrane segment at 321-339 (LAALFIAQATDTPLSYGDQ) threads the bilayer. Over 340–350 (ILLLLVAMLSS) the chain is Periplasmic. The chain crosses the membrane as a helical span at residues 351–369 (KGAAGITGAGFITLAATLS). Topologically, residues 370–378 (VVPSVPVAG) are cytoplasmic. The chain crosses the membrane as a helical span at residues 379–398 (MALILGIDRFMSECRALTNF). Topologically, residues 399–405 (VGNAVAT) are periplasmic. The helical transmembrane segment at 406–424 (IVVAKWEGELDQAQLSAAL) threads the bilayer. The Cytoplasmic portion of the chain corresponds to 425 to 441 (GGEASVEAIPAVVQPAE).

This sequence belongs to the dicarboxylate/amino acid:cation symporter (DAACS) (TC 2.A.23) family.

Its subcellular location is the cell inner membrane. In terms of biological role, responsible for the transport of dicarboxylates such as succinate, fumarate, and malate from the periplasm across the inner membrane. This transport system plays an important role in the energy supply of rhizobium-legume symbionts. The polypeptide is C4-dicarboxylate transport protein (dctA) (Rhizobium meliloti (strain 1021) (Ensifer meliloti)).